We begin with the raw amino-acid sequence, 146 residues long: Snaclec agkisacutacin subunit B (146 aa).

Positions 1–23 (MGRFIFVSFGLLVVFLSLSGTAA) are cleaved as a signal peptide. One can recognise a C-type lectin domain in the interval 24-146 (DCPSDWSSYE…TCSFVCKFQA (123 aa)). Disulfide bonds link Cys-25/Cys-36, Cys-53/Cys-142, and Cys-119/Cys-134. 2 residues coordinate Ca(2+): Ser-64 and Glu-70.

This sequence belongs to the snaclec family. In terms of assembly, heterodimer of subunits A and B; disulfide-linked. Expressed by the venom gland.

The protein resides in the secreted. In terms of biological role, anticoagulant protein which binds to the gamma-carboxyglutamic acid-domain regions of factor IX (F9) and factor X (F10) in the presence of calcium with a 1 to 1 stoichiometry. Also inhibits platelet aggregation by binding to platelet glycoprotein Ibalpha (GP1BA) and functioning as a blocker of von Willebrand factor (VWF). Is devoid of hemorrhagic and lethal activities. Possesses antithrombotic and thrombolytic activities. Also hydrolyzes the Aalpha-chain of fibrinogen (FGA). Does not affect the Bbeta-chain (FGB) and the gamma chain (FGG). In Deinagkistrodon acutus (Hundred-pace snake), this protein is Snaclec agkisacutacin subunit B.